Here is a 119-residue protein sequence, read N- to C-terminus: Endocuticle structural glycoprotein SgAbd-3 (119 aa).

Gln1 bears the Pyrrolidone carboxylic acid mark. Residues 24-98 (DGSYRYSFET…PQGAHLPTPP (75 aa)) enclose the Chitin-binding type R&amp;R domain. The tract at residues 33 to 55 (TSDGQRASQEGALKQVSAPGPDG) is disordered. O-linked (HexNAc...) threonine glycosylation is present at Thr96.

Functionally, component of the abdominal endocuticle. The sequence is that of Endocuticle structural glycoprotein SgAbd-3 from Schistocerca gregaria (Desert locust).